A 70-amino-acid chain; its full sequence is MIDNWVILAIRFYQRYISPLLGRHCRFYPTCSQYALEAITKYGLLRGGLLATRRLLHCHPWDAGGYDPVP.

It belongs to the UPF0161 family.

It is found in the cell membrane. In terms of biological role, could be involved in insertion of integral membrane proteins into the membrane. The chain is Putative membrane protein insertion efficiency factor from Moorella thermoacetica (strain ATCC 39073 / JCM 9320).